The sequence spans 361 residues: MHISTIKTAGSSGMSHMNEAYSSTTATEMVARGAGSEIIHTEIDSNGSKELAPNGAQSRVQKPSEDAVRAPYDYIRTLPSKRIRETFIDALDSWLAVPAGSSTSIKSIIGMLHQSSLMLDDIEDDSTLRRGKPTAHTLFGTAQTINSANWVFVCAFEELRQLRGVDAATVFVEELKNLHCGQALDLHWKHHTYIPSVDEYLNMVDHKTGGLFRLCVRLMQGESSTSCHHIDAERFITLLGRYFQIRDDYQNLVSDEYTNQKGFCEDLDEGKISLPLIYCLAGSDPTQIMIKGILQHKRTGEMPLSMKKLILEKMRSGGALNATISLLKDLQDDILEELKSLELAFGSGNPMLELVLRRLWI.

The segment at 44–63 is disordered; that stretch reads DSNGSKELAPNGAQSRVQKP. Isopentenyl diphosphate-binding residues include Lys-81, Arg-84, and His-113. Residues Asp-120 and Asp-124 each coordinate Mg(2+). Dimethylallyl diphosphate is bound at residue Arg-129. Residue Arg-130 participates in isopentenyl diphosphate binding. Dimethylallyl diphosphate-binding residues include Lys-207, Thr-208, and Gln-244. Residue Asp-247 participates in Mg(2+) binding. Dimethylallyl diphosphate contacts are provided by Asn-251, Lys-261, and Lys-271.

Belongs to the FPP/GGPP synthase family. The cofactor is Mg(2+).

The catalysed reaction is isopentenyl diphosphate + dimethylallyl diphosphate = (2E)-geranyl diphosphate + diphosphate. The enzyme catalyses isopentenyl diphosphate + (2E)-geranyl diphosphate = (2E,6E)-farnesyl diphosphate + diphosphate. It carries out the reaction isopentenyl diphosphate + (2E,6E)-farnesyl diphosphate = (2E,6E,10E)-geranylgeranyl diphosphate + diphosphate. Geranylgeranyl pyrophosphate synthase; part of the gene cluster 25 that mediates the biosynthesis of an isoprenoid secondary metabolite. In Zymoseptoria tritici (strain CBS 115943 / IPO323) (Speckled leaf blotch fungus), this protein is Geranylgeranyl pyrophosphate synthase 3 (GGS3).